A 241-amino-acid polypeptide reads, in one-letter code: ATP phosphoribosyltransferase (241 aa).

This sequence belongs to the ATP phosphoribosyltransferase family. Short subfamily. Heteromultimer composed of HisG and HisZ subunits.

The protein resides in the cytoplasm. It carries out the reaction 1-(5-phospho-beta-D-ribosyl)-ATP + diphosphate = 5-phospho-alpha-D-ribose 1-diphosphate + ATP. It participates in amino-acid biosynthesis; L-histidine biosynthesis; L-histidine from 5-phospho-alpha-D-ribose 1-diphosphate: step 1/9. In terms of biological role, catalyzes the condensation of ATP and 5-phosphoribose 1-diphosphate to form N'-(5'-phosphoribosyl)-ATP (PR-ATP). Has a crucial role in the pathway because the rate of histidine biosynthesis seems to be controlled primarily by regulation of HisG enzymatic activity. The polypeptide is ATP phosphoribosyltransferase (Gluconobacter oxydans (strain 621H) (Gluconobacter suboxydans)).